The chain runs to 130 residues: Small ribosomal subunit protein uS11c (130 aa).

The protein belongs to the universal ribosomal protein uS11 family. In terms of assembly, part of the 30S ribosomal subunit.

The protein resides in the plastid. The protein localises to the chloroplast. The chain is Small ribosomal subunit protein uS11c from Adiantum capillus-veneris (Maidenhair fern).